A 1268-amino-acid chain; its full sequence is Vigilin (1268 aa).

Ser2 is subject to N-acetylserine. Phosphothreonine is present on Thr8. Phosphoserine is present on residues Ser11, Ser31, and Ser35. 14 consecutive KH domains span residues 158–229 (PKEH…RLEV), 230–302 (EKAF…AVEV), 303–371 (KKSQ…SVAA), 372–442 (PSWL…EINI), 443–514 (DHKF…DLII), 515–588 (EQRF…SVPI), 589–660 (FKQF…EVSI), 661–734 (PAKL…DIRA), 735–807 (KPEY…SMLV), 808–880 (DPKH…ECAI), 881–979 (PQKF…EVEV), 980–1059 (PFDL…SVTV), 1060–1134 (DPKY…DVPL), and 1135–1209 (DHRV…ALQV). Phosphothreonine occurs at positions 295 and 296. Ser317 carries the phosphoserine modification. Tyr437 carries the post-translational modification Phosphotyrosine. Ser645 carries the phosphoserine modification. The disordered stretch occupies residues 910–947 (PDREENPVHSTEPAVQENGDEAGEGREAKDSDPGSPRR). Residues 932–947 (GEGREAKDSDPGSPRR) are compositionally biased toward basic and acidic residues. An N6-acetyllysine modification is found at Lys991. Positions 1237 to 1249 (SSEKAPDMSSSEE) are enriched in polar residues. The disordered stretch occupies residues 1237-1268 (SSEKAPDMSSSEEFPSFGAQVAPKTLPWGPKR). A phosphoserine mark is found at Ser1247 and Ser1252.

It is found in the cytoplasm. The protein localises to the nucleus. Appears to play a role in cell sterol metabolism. It may function to protect cells from over-accumulation of cholesterol. The polypeptide is Vigilin (HDLBP) (Pongo abelii (Sumatran orangutan)).